A 437-amino-acid chain; its full sequence is Glycogen synthase (437 aa).

Residue Lys-15 coordinates ADP-alpha-D-glucose.

The protein belongs to the glycosyltransferase 1 family. Bacterial/plant glycogen synthase subfamily.

It catalyses the reaction [(1-&gt;4)-alpha-D-glucosyl](n) + ADP-alpha-D-glucose = [(1-&gt;4)-alpha-D-glucosyl](n+1) + ADP + H(+). Its pathway is glycan biosynthesis; glycogen biosynthesis. In terms of biological role, synthesizes alpha-1,4-glucan chains using ADP-glucose. In Thermus thermophilus (strain ATCC 27634 / DSM 579 / HB8), this protein is Glycogen synthase.